The following is a 253-amino-acid chain: MSGHSKWATTKHKKAAIDAKRAKAFAKYIKGIEVAARMGGADTSGNPALELAVSKAKKNSVPNDNIDRAIKRGAGLTGETIDYTEILYEARGPQGTALYIECLTDNKNRAASEVRVAVTRHGGTMADSGSVAYLFERKGVVEVAKTDGLTEDDVLMAVLDAGADEVLDESDVFEVVSEATDLPAIRAALDEAGLEYNNDDPQFRATMTVDLDAEGARKFLKLADAVEELDDVQNVYSNANIPADVMAQLEDDE.

Belongs to the TACO1 family.

The protein localises to the cytoplasm. The polypeptide is Probable transcriptional regulatory protein KRH_13670 (Kocuria rhizophila (strain ATCC 9341 / DSM 348 / NBRC 103217 / DC2201)).